A 207-amino-acid polypeptide reads, in one-letter code: Probable HTH-type transcriptional regulator YttP (207 aa).

Residues 3–63 (VSTKDKIIES…HLVSEFYEGY (61 aa)) form the HTH tetR-type domain. A DNA-binding region (H-T-H motif) is located at residues 26–45 (SVREIAKSADVNVAHISYYF).

In Bacillus subtilis (strain 168), this protein is Probable HTH-type transcriptional regulator YttP (yttP).